Consider the following 409-residue polypeptide: Adenosine deaminase (409 aa).

Positions 65, 67, 207, and 314 each coordinate Zn(2+).

This sequence belongs to the metallo-dependent hydrolases superfamily. Zn(2+) is required as a cofactor.

It catalyses the reaction adenosine + H2O + H(+) = inosine + NH4(+). Its function is as follows. Catalyzes the deamination of adenosine into inosine. Is also able to deaminate adenine, but with considerably less efficiency. Is not active toward 6-chloroadenine. The protein is Adenosine deaminase of Helicobacter pylori (strain ATCC 700392 / 26695) (Campylobacter pylori).